A 59-amino-acid chain; its full sequence is Single-pass membrane and coiled-coil domain-containing protein 4 (59 aa).

The interval 1-27 is disordered; sequence MRQLKGKPKKETSRDKKERKQAMQEAR. Over residues 9–27 the composition is skewed to basic and acidic residues; that stretch reads KKETSRDKKERKQAMQEAR. The stretch at 9–31 forms a coiled coil; it reads KKETSRDKKERKQAMQEARRQIT. Residues 32 to 52 form a helical membrane-spanning segment; the sequence is TVVLPTLAVVVLLIVVFVYVA.

This sequence belongs to the SMCO4 family.

The protein resides in the membrane. The protein is Single-pass membrane and coiled-coil domain-containing protein 4 (SMCO4) of Bos taurus (Bovine).